The primary structure comprises 465 residues: MTVAKTRTETDTFGPIEVAADRYWGAQAQRSLGNFKIGWEKQPASIVRALGVVKRAAAEVNMEMKRLDPVVGKAIVDAAQEVIDGKLNDHFPLVVWQTGSGTQSNMNANEVISNRAIEMLGGVMGSKKPVHPNDHVNMSQSSNDTYPTAMHIACAEQVVHHLIPALHHLHKALDAKARAFNHIIKIGRTHTQDATPLTLGQEFSGYAAQVASSIKRIEMTLPGLQELAQGGTAVGTGLNAPVGFAEKVADRIAAITGIAFVTAPNKFEALAAHDSMVFSHGAINAAAAALFKIANDIRFLGSGPRSGLGELSLPENEPGSSIMPGKVNPTQCEAMTQVCVQVFGNNAALTFAGSQGHFELNVYNPLMAYNFLQSVQLLSDASVSFTDNCVVGIEAREDNIKAALDRSLMLVTALAPTIGYDNAAKIAKTAHKNGTTLREEALATGLVSEVDYDRLVRPEDMTHPG.

Substrate is bound by residues serine 100 to threonine 102, histidine 131 to aspartate 134, serine 141 to asparagine 143, and threonine 189. Histidine 190 (proton donor/acceptor) is an active-site residue. The active site involves serine 320. Substrate-binding positions include serine 321 and lysine 326–asparagine 328.

It belongs to the class-II fumarase/aspartase family. Fumarase subfamily. Homotetramer.

It is found in the cytoplasm. It carries out the reaction (S)-malate = fumarate + H2O. It functions in the pathway carbohydrate metabolism; tricarboxylic acid cycle; (S)-malate from fumarate: step 1/1. In terms of biological role, involved in the TCA cycle. Catalyzes the stereospecific interconversion of fumarate to L-malate. This Mesorhizobium japonicum (strain LMG 29417 / CECT 9101 / MAFF 303099) (Mesorhizobium loti (strain MAFF 303099)) protein is Fumarate hydratase class II.